The following is a 380-amino-acid chain: Probable protein phosphatase 2C 34 (380 aa).

The region spanning 32–335 is the PPM-type phosphatase domain; that stretch reads AAGEFSMAAA…DDISVIVVYL (304 aa). The Mn(2+) site is built by D66, G67, D267, and D326.

The protein belongs to the PP2C family. Requires Mg(2+) as cofactor. Mn(2+) serves as cofactor.

It carries out the reaction O-phospho-L-seryl-[protein] + H2O = L-seryl-[protein] + phosphate. It catalyses the reaction O-phospho-L-threonyl-[protein] + H2O = L-threonyl-[protein] + phosphate. This chain is Probable protein phosphatase 2C 34 (BIPP2C2), found in Oryza sativa subsp. indica (Rice).